Here is an 88-residue protein sequence, read N- to C-terminus: Cell division topological specificity factor (88 aa).

This sequence belongs to the MinE family.

Its function is as follows. Prevents the cell division inhibition by proteins MinC and MinD at internal division sites while permitting inhibition at polar sites. This ensures cell division at the proper site by restricting the formation of a division septum at the midpoint of the long axis of the cell. The sequence is that of Cell division topological specificity factor from Clostridium novyi (strain NT).